A 343-amino-acid polypeptide reads, in one-letter code: Phosphoribosylformylglycinamidine cyclo-ligase (343 aa).

It belongs to the AIR synthase family.

The protein localises to the cytoplasm. The catalysed reaction is 2-formamido-N(1)-(5-O-phospho-beta-D-ribosyl)acetamidine + ATP = 5-amino-1-(5-phospho-beta-D-ribosyl)imidazole + ADP + phosphate + H(+). Its pathway is purine metabolism; IMP biosynthesis via de novo pathway; 5-amino-1-(5-phospho-D-ribosyl)imidazole from N(2)-formyl-N(1)-(5-phospho-D-ribosyl)glycinamide: step 2/2. The polypeptide is Phosphoribosylformylglycinamidine cyclo-ligase (Rippkaea orientalis (strain PCC 8801 / RF-1) (Cyanothece sp. (strain PCC 8801))).